We begin with the raw amino-acid sequence, 143 residues long: Large ribosomal subunit protein uL13 (143 aa).

The protein belongs to the universal ribosomal protein uL13 family. As to quaternary structure, part of the 50S ribosomal subunit.

This protein is one of the early assembly proteins of the 50S ribosomal subunit, although it is not seen to bind rRNA by itself. It is important during the early stages of 50S assembly. The protein is Large ribosomal subunit protein uL13 of Neisseria gonorrhoeae (strain ATCC 700825 / FA 1090).